A 517-amino-acid chain; its full sequence is Ribonuclease Y (517 aa).

The chain crosses the membrane as a helical span at residues 2 to 22 (EILVYIIIGIAIFILSLLVGI). Positions 207 to 267 (TTSTVALPTD…LRREIAKRTL (61 aa)) constitute a KH domain. One can recognise an HD domain in the interval 333–426 (VLEHSIEVAQ…VAASDALSAS (94 aa)).

The protein belongs to the RNase Y family.

It localises to the cell membrane. Functionally, endoribonuclease that initiates mRNA decay. This chain is Ribonuclease Y, found in Petrotoga mobilis (strain DSM 10674 / SJ95).